The chain runs to 551 residues: L-lactate permease (551 aa).

12 helical membrane-spanning segments follow: residues 13-33, 37-57, 69-89, 131-151, 159-179, 194-214, 245-265, 306-326, 366-386, 405-425, 438-458, and 530-550; these read NIWL…FALI, LKGY…ALLF, VVYG…AAVF, GAAG…GLGF, LCLI…PILV, MVGR…MAIM, IGPE…LTLF, FLFL…ALFA, FDWF…SIVW, LALP…SNYS, TGSA…FLTG, and IFTC…TWMI.

This sequence belongs to the lactate permease family.

It is found in the cell inner membrane. It catalyses the reaction (S)-lactate(in) + H(+)(in) = (S)-lactate(out) + H(+)(out). The catalysed reaction is (R)-lactate(in) + H(+)(in) = (R)-lactate(out) + H(+)(out). The enzyme catalyses glycolate(in) + H(+)(in) = glycolate(out) + H(+)(out). Functionally, uptake of L-lactate across the membrane. Can also transport D-lactate and glycolate. Seems to be driven by a proton motive force. In Salmonella typhi, this protein is L-lactate permease (lldP).